Consider the following 431-residue polypeptide: Tyrosine--tRNA ligase (431 aa).

An L-tyrosine-binding site is contributed by Y33. The short motif at 38 to 47 (PTADSLHIGS) is the 'HIGH' region element. Positions 172 and 176 each coordinate L-tyrosine. The 'KMSKS' region signature appears at 234-238 (KFGKS). ATP is bound at residue K237. Residues 364-431 (LDIVTVLNEK…KKNYFVIRVV (68 aa)) form the S4 RNA-binding domain.

The protein belongs to the class-I aminoacyl-tRNA synthetase family. TyrS type 1 subfamily. In terms of assembly, homodimer.

The protein resides in the cytoplasm. The enzyme catalyses tRNA(Tyr) + L-tyrosine + ATP = L-tyrosyl-tRNA(Tyr) + AMP + diphosphate + H(+). In terms of biological role, catalyzes the attachment of tyrosine to tRNA(Tyr) in a two-step reaction: tyrosine is first activated by ATP to form Tyr-AMP and then transferred to the acceptor end of tRNA(Tyr). The chain is Tyrosine--tRNA ligase from Flavobacterium johnsoniae (strain ATCC 17061 / DSM 2064 / JCM 8514 / BCRC 14874 / CCUG 350202 / NBRC 14942 / NCIMB 11054 / UW101) (Cytophaga johnsonae).